Consider the following 250-residue polypeptide: Sulfate transporter CysZ (250 aa).

4 consecutive transmembrane segments (helical) span residues 26 to 46 (LFVL…IYLA), 71 to 91 (ILWP…FTML), 150 to 170 (LFIL…WLLF), and 211 to 231 (IVYL…AAVA).

The protein belongs to the CysZ family.

The protein resides in the cell inner membrane. Its function is as follows. High affinity, high specificity proton-dependent sulfate transporter, which mediates sulfate uptake. Provides the sulfur source for the cysteine synthesis pathway. In Pseudomonas fluorescens (strain Pf0-1), this protein is Sulfate transporter CysZ.